The following is a 118-amino-acid chain: Putative ankyrin repeat protein R747 (118 aa).

Residues 70–99 (NCYYLLDYAIMKNDIPVIVTLIEKGANINR) form an ANK repeat.

This Acanthamoeba polyphaga (Amoeba) protein is Putative ankyrin repeat protein R747.